The following is a 367-amino-acid chain: MVPPLPLLLLLLLVPQGGHGCQGSELDREIVLAKVRALFLDALGPPAVTGEGGDPGVRRLPRRHALGGFARRGSEPEEEDVSQAILFPASGSRCEDEPAAGELAQEAEQGLFTYMFRPSQHMRSRQVTSAHLWFHTGLDRQGTAASNSSEPLLGLLALSSGGPMAVPVTLGQAPPCWAVLHLAASALPLLTHPVLVLLLRCPLCSCSARPEATPFLVAHTRARPPSGGERTRRSTPPLPWPWSPAALRLLQRPPEEPAAHANCHRAALNISFQELGWDRWIVHPRSFIFHYCHGGCGLSAPPDLPLPVPEVPPTPIQPLSLVPGAQPCCAALPGTMRPLRVRTTSDGGYSFKYEIVPNLLTQHCACI.

The N-terminal stretch at 1–20 (MVPPLPLLLLLLLVPQGGHG) is a signal peptide. Positions 21–63 (CQGSELDREIVLAKVRALFLDALGPPAVTGEGGDPGVRRLPRR) are excised as a propeptide. Residues 64–233 (HALGGFARRG…PPSGGERTRR (170 aa)) constitute a propeptide, inhibin alpha N-terminal region. Residues asparagine 147 and asparagine 269 are each glycosylated (N-linked (GlcNAc...) asparagine). Intrachain disulfides connect cysteine 263-cysteine 329, cysteine 292-cysteine 364, and cysteine 296-cysteine 366.

Belongs to the TGF-beta family. As to quaternary structure, dimeric, linked by one or more disulfide bonds. Activin B is a dimer of alpha and beta-B. Inhibin A is a dimer of alpha and beta-A. Inhibin B is a dimer of alpha and beta-B. Interacts with TGFBR3L; this interaction regulates female fertility. Post-translationally, proteolytic processing yields a number of bioactive forms, consisting either solely of the mature alpha chain, of the most N-terminal propeptide linked through a disulfide bond to the mature alpha chain, or of the entire proprotein.

The protein resides in the secreted. Its function is as follows. Inhibins and activins inhibit and activate, respectively, the secretion of follitropin by the pituitary gland. Inhibins/activins are involved in regulating a number of diverse functions such as hypothalamic and pituitary hormone secretion, gonadal hormone secretion, germ cell development and maturation, erythroid differentiation, insulin secretion, nerve cell survival, embryonic axial development or bone growth, depending on their subunit composition. Inhibins appear to oppose the functions of activins. Functionally, inhibin A is a dimer of alpha/INHA and beta-A/INHBA that functions as a feedback regulator in the hypothalamic-pituitary-gonadal (HPG) axis. Inhibits the secretion of FSH from the anterior pituitary gland by acting on pituitary gonadotrope cells. Antagonizes activin A by binding to the proteoglycan, betaglycan, and forming a stable complex with and, thereby, sequestering type II activin receptors while excluding type I receptor. In terms of biological role, inhibin B is a dimer of alpha and beta-B that plays a crucial role in the regulation of the reproductive system by inhibiting the secretion of follicle-stimulating hormone (FSH) from the anterior pituitary gland. Thereby, maintains reproductive homeostasis in both males and females. Acts as a more potent suppressor of FSH release than inhibin A. Functions as competitive receptor antagonist binding activin type II receptors with high affinity in the presence of the TGF-beta type III coreceptor/TGFBR3L. This is Inhibin alpha chain (INHA) from Equus caballus (Horse).